Reading from the N-terminus, the 183-residue chain is Peptidyl-tRNA hydrolase (183 aa).

Tyr-14 is a binding site for tRNA. His-19 acts as the Proton acceptor in catalysis. Residues Tyr-60 and Asn-62 each contribute to the tRNA site.

The protein belongs to the PTH family. Monomer.

The protein localises to the cytoplasm. The catalysed reaction is an N-acyl-L-alpha-aminoacyl-tRNA + H2O = an N-acyl-L-amino acid + a tRNA + H(+). In terms of biological role, hydrolyzes ribosome-free peptidyl-tRNAs (with 1 or more amino acids incorporated), which drop off the ribosome during protein synthesis, or as a result of ribosome stalling. Catalyzes the release of premature peptidyl moieties from peptidyl-tRNA molecules trapped in stalled 50S ribosomal subunits, and thus maintains levels of free tRNAs and 50S ribosomes. The polypeptide is Peptidyl-tRNA hydrolase (Mycoplasmoides gallisepticum (strain R(low / passage 15 / clone 2)) (Mycoplasma gallisepticum)).